A 229-amino-acid chain; its full sequence is Small ribosomal subunit protein uS3 (229 aa).

Positions 39–109 (MRKYIKEQLM…QVNIDIVEIR (71 aa)) constitute a KH type-2 domain. The interval 210 to 229 (VVSQQNSRPSGPRGPRRPRA) is disordered.

It belongs to the universal ribosomal protein uS3 family. In terms of assembly, part of the 30S ribosomal subunit. Forms a tight complex with proteins S10 and S14.

Functionally, binds the lower part of the 30S subunit head. Binds mRNA in the 70S ribosome, positioning it for translation. This chain is Small ribosomal subunit protein uS3, found in Akkermansia muciniphila (strain ATCC BAA-835 / DSM 22959 / JCM 33894 / BCRC 81048 / CCUG 64013 / CIP 107961 / Muc).